The following is a 601-amino-acid chain: RNA-binding protein MEX3B (601 aa).

Disordered stretches follow at residues 1-39 (MPSS…DDQR) and 90-109 (GRQG…ISPT). Serine 4 is modified (phosphoserine). The span at 13–33 (GSGGGGGGGGGGGGGGSGGGE) shows a compositional bias: gly residues. 2 consecutive KH domains span residues 98–159 (DGDR…RREI) and 192–253 (QTTI…REEI). 2 disordered regions span residues 284–332 (LHHG…TDSY) and 344–448 (TSRL…GGAS). Serine 320 is subject to Phosphoserine. Composition is skewed to low complexity over residues 320–331 (SSSSLGSASTDS) and 362–371 (NGNNNNNGNG). Pro residues predominate over residues 395-404 (DPAPAPPPGT). Positions 420-442 (AAPVSSSCSSSASSSASSSSVVF) are enriched in low complexity. Serine 494 bears the Phosphoserine mark. Positions 514–546 (LPGLPSSDTSGSSSSSSSSSSSSSSSSGLRRKG) are disordered. Over residues 519-540 (SSDTSGSSSSSSSSSSSSSSSS) the composition is skewed to low complexity. An RING-type zinc finger spans residues 550–590 (CSVCFESEVIAALVPCGHNLFCMECANRICEKSEPECPVCH).

Post-translationally, phosphorylation at Ser-494 creates a docking site for 14-3-3, which stabilizes the protein and modulates its ability to bind RNA.

It is found in the cytoplasm. The protein resides in the nucleus. It localises to the P-body. The protein localises to the cytoplasmic granule. Its function is as follows. RNA-binding protein. May be involved in post-transcriptional regulatory mechanisms. This is RNA-binding protein MEX3B (Mex3b) from Mus musculus (Mouse).